Consider the following 354-residue polypeptide: Uroporphyrinogen decarboxylase (354 aa).

Substrate contacts are provided by residues 27 to 31 (RQAGR), aspartate 77, tyrosine 153, threonine 208, and histidine 326.

Belongs to the uroporphyrinogen decarboxylase family. Homodimer.

Its subcellular location is the cytoplasm. It catalyses the reaction uroporphyrinogen III + 4 H(+) = coproporphyrinogen III + 4 CO2. The protein operates within porphyrin-containing compound metabolism; protoporphyrin-IX biosynthesis; coproporphyrinogen-III from 5-aminolevulinate: step 4/4. In terms of biological role, catalyzes the decarboxylation of four acetate groups of uroporphyrinogen-III to yield coproporphyrinogen-III. This chain is Uroporphyrinogen decarboxylase, found in Neisseria gonorrhoeae (strain NCCP11945).